The chain runs to 442 residues: Glutamate-1-semialdehyde 2,1-aminomutase (442 aa).

An N6-(pyridoxal phosphate)lysine modification is found at Lys-282.

It belongs to the class-III pyridoxal-phosphate-dependent aminotransferase family. HemL subfamily. As to quaternary structure, homodimer. Requires pyridoxal 5'-phosphate as cofactor.

It is found in the cytoplasm. It catalyses the reaction (S)-4-amino-5-oxopentanoate = 5-aminolevulinate. Its pathway is porphyrin-containing compound metabolism; protoporphyrin-IX biosynthesis; 5-aminolevulinate from L-glutamyl-tRNA(Glu): step 2/2. This is Glutamate-1-semialdehyde 2,1-aminomutase from Polaromonas naphthalenivorans (strain CJ2).